The primary structure comprises 211 residues: Protein 33K (211 aa).

2 disordered regions span residues 1–95 and 107–140; these read MPPK…PCSL and AGSPTAPAAPTKRLEKTPRVRKTSSAIATRQDSP. Acidic residues predominate over residues 24–65; that stretch reads DEEETWDDSQAEEVSDEEAEEQMESWDSLDEEDLEDVEEETI. A compositionally biased stretch (pro residues) spans 83–92; that stretch reads KTIPPLPPQP. Residues 129–140 show a composition bias toward polar residues; it reads TSSAIATRQDSP. The necessary for nuclear subcellular location stretch occupies residues 154–181; that stretch reads YAIFQQSRGQQLELKVKNRSLRSLTRSC. The segment at 160 to 180 is RS-repeat; required for splicing enhancer activity; the sequence is SRGQQLELKVKNRSLRSLTRS.

It belongs to the adenoviridae splicing factor family. In terms of assembly, homooligomer. Interacts with DBP; this interaction occurs at a unique vertex during genome packaging. Interacts with IVa2; this interaction occurs at a unique vertex during genome packaging and seems to potentiate IVa2 and 33K oligomerization. Phosphorylated in vitro by human PKA and PRKDC. PRKDC inhibits, whereas PKA activates the splicing factor.

The protein resides in the host nucleus. Functionally, promotes alternative splicing of late transcripts by promoting splicing at weak 3' splice sites. Required for the temporal activation of major late pre-mRNA splicing at late times of infection. Induces the splicing and expression of the late capsid vertex protein. In terms of biological role, probably functions as the small terminase that is part of the molecular motor that translocates genomic DNA in empty capsid during DNA packaging. This motor is located at a unique vertex and comprises at least the IVa2 ATPase, the small terminase 33K and probably a portal. Forms a ring-like structure of about 17 nm in which genomic DNA is translocated into the capsid. Stimulates IVa2 ATPase activity in the presence of the viral genome. Once the DNA is packaged, the terminase detaches: the 33K protein is present in the empty particles, but not in the mature virions. Also involved in virion assembly. The polypeptide is Protein 33K (Human adenovirus F serotype 40 (HAdV-40)).